Consider the following 643-residue polypeptide: Alpha-dioxygenase 1 (643 aa).

Residue His167 is the Proton acceptor of the active site. Asp168 is a Ca(2+) binding site. His172 is a binding site for heme b. Positions 220, 222, 224, and 226 each coordinate Ca(2+). His392, Arg489, and Arg493 together coordinate heme b.

Belongs to the peroxidase family. Requires heme b as cofactor. Ca(2+) serves as cofactor.

Its function is as follows. Alpha-dioxygenase that catalyzes the primary oxygenation step of a variety of 14-20 carbon fatty acids, containing up to three unsaturated bonds, into their corresponding 2R-hydroperoxides. Involved in the production of oxylipins that function in cell signaling, wound healing, and protection from infection. The lipid-derived signaling pathway is involved in the initial response of hot pepper plants to pathogen infection. The polypeptide is Alpha-dioxygenase 1 (Capsicum annuum (Capsicum pepper)).